A 239-amino-acid polypeptide reads, in one-letter code: 1-(5-phosphoribosyl)-5-[(5-phosphoribosylamino)methylideneamino] imidazole-4-carboxamide isomerase (239 aa).

The active-site Proton acceptor is the aspartate 9. Aspartate 131 functions as the Proton donor in the catalytic mechanism.

It belongs to the HisA/HisF family.

It is found in the cytoplasm. It catalyses the reaction 1-(5-phospho-beta-D-ribosyl)-5-[(5-phospho-beta-D-ribosylamino)methylideneamino]imidazole-4-carboxamide = 5-[(5-phospho-1-deoxy-D-ribulos-1-ylimino)methylamino]-1-(5-phospho-beta-D-ribosyl)imidazole-4-carboxamide. It participates in amino-acid biosynthesis; L-histidine biosynthesis; L-histidine from 5-phospho-alpha-D-ribose 1-diphosphate: step 4/9. The chain is 1-(5-phosphoribosyl)-5-[(5-phosphoribosylamino)methylideneamino] imidazole-4-carboxamide isomerase from Parabacteroides distasonis (strain ATCC 8503 / DSM 20701 / CIP 104284 / JCM 5825 / NCTC 11152).